The sequence spans 1209 residues: Zinc finger protein 804A (1209 aa).

The C2H2-type zinc finger occupies 57–81 (FYCELCDKQYYKHQEFDNHINSYDH). Positions 380 to 394 (VKHNEASTTEVENKN) are enriched in basic and acidic residues. 2 disordered regions span residues 380-401 (VKHN…TLAP) and 792-860 (PEEF…MKPQ). The segment covering 807–819 (KPKKKRRRKRGRF) has biased composition (basic residues). Composition is skewed to basic and acidic residues over residues 826–836 (LELKENTDYPV) and 848–860 (LISE…MKPQ).

This Homo sapiens (Human) protein is Zinc finger protein 804A (ZNF804A).